A 201-amino-acid chain; its full sequence is dITP/XTP pyrophosphatase (201 aa).

Substrate is bound at residue Ser-8–Lys-13. Glu-40 and Asp-69 together coordinate Mg(2+). The active-site Proton acceptor is Asp-69. Residues Ser-70, Phe-155–Asp-158, Lys-178, and His-183–Arg-184 contribute to the substrate site.

The protein belongs to the HAM1 NTPase family. In terms of assembly, homodimer. Mg(2+) is required as a cofactor.

It catalyses the reaction XTP + H2O = XMP + diphosphate + H(+). The catalysed reaction is dITP + H2O = dIMP + diphosphate + H(+). The enzyme catalyses ITP + H2O = IMP + diphosphate + H(+). Its function is as follows. Pyrophosphatase that catalyzes the hydrolysis of nucleoside triphosphates to their monophosphate derivatives, with a high preference for the non-canonical purine nucleotides XTP (xanthosine triphosphate), dITP (deoxyinosine triphosphate) and ITP. Seems to function as a house-cleaning enzyme that removes non-canonical purine nucleotides from the nucleotide pool, thus preventing their incorporation into DNA/RNA and avoiding chromosomal lesions. The polypeptide is dITP/XTP pyrophosphatase (Ralstonia nicotianae (strain ATCC BAA-1114 / GMI1000) (Ralstonia solanacearum)).